Consider the following 697-residue polypeptide: Elongation factor G (697 aa).

Residues 8–290 (ERYRNFGIMA…AVVDYLPSPL (283 aa)) enclose the tr-type G domain. Residues 17–24 (AHIDAGKT), 88–92 (DTPGH), and 142–145 (NKLD) contribute to the GTP site.

Belongs to the TRAFAC class translation factor GTPase superfamily. Classic translation factor GTPase family. EF-G/EF-2 subfamily.

Its subcellular location is the cytoplasm. Its function is as follows. Catalyzes the GTP-dependent ribosomal translocation step during translation elongation. During this step, the ribosome changes from the pre-translocational (PRE) to the post-translocational (POST) state as the newly formed A-site-bound peptidyl-tRNA and P-site-bound deacylated tRNA move to the P and E sites, respectively. Catalyzes the coordinated movement of the two tRNA molecules, the mRNA and conformational changes in the ribosome. The protein is Elongation factor G of Sphingopyxis alaskensis (strain DSM 13593 / LMG 18877 / RB2256) (Sphingomonas alaskensis).